Consider the following 142-residue polypeptide: Relaxin-3 (142 aa).

The first 25 residues, 1-25, serve as a signal peptide directing secretion; sequence MARYMLLLLLAVWVLTGELWPGAEA. 3 disulfide bridges follow: C35–C129, C47–C142, and C128–C133. Residues 55 to 118 constitute a propeptide, connecting peptide; the sequence is SDILAHEAMG…GTPGVLRGSR (64 aa).

It belongs to the insulin family. In terms of assembly, heterodimer of a B chain and an A chain linked by two disulfide bonds.

It localises to the secreted. Functionally, may play a role in neuropeptide signaling processes. Ligand for LGR7, RXFP3 and RXFP4. This Homo sapiens (Human) protein is Relaxin-3 (RLN3).